An 805-amino-acid polypeptide reads, in one-letter code: Leucine--tRNA ligase (805 aa).

The short motif at 40-51 is the 'HIGH' region element; that stretch reads PYPSGQGLHVGH. The 'KMSKS' region signature appears at 576–580; it reads KMSKS. Lys579 is an ATP binding site.

Belongs to the class-I aminoacyl-tRNA synthetase family.

The protein resides in the cytoplasm. The catalysed reaction is tRNA(Leu) + L-leucine + ATP = L-leucyl-tRNA(Leu) + AMP + diphosphate. In Ligilactobacillus salivarius (strain UCC118) (Lactobacillus salivarius), this protein is Leucine--tRNA ligase.